Here is a 121-residue protein sequence, read N- to C-terminus: uncharacterized protein (121 aa).

Disordered regions lie at residues 1–28 and 60–82; these read MGCA…QNGD and QENL…VPGL. A phosphoserine mark is found at Ser95 and Ser115.

In terms of tissue distribution, expressed in spleen, prostate, testis and uterus.

This is an uncharacterized protein from Homo sapiens (Human).